The sequence spans 87 residues: UPF0250 protein ESA_02696 (87 aa).

It belongs to the UPF0250 family.

The sequence is that of UPF0250 protein ESA_02696 from Cronobacter sakazakii (strain ATCC BAA-894) (Enterobacter sakazakii).